The following is a 198-amino-acid chain: Penicillin-binding protein activator LpoB (198 aa).

The signal sequence occupies residues 1-20 (MSWIRIRRSGVLLLALVLSG). A lipid anchor (N-palmitoyl cysteine) is attached at Cys-21. Residue Cys-21 is the site of S-diacylglycerol cysteine attachment. The tract at residues 28 to 62 (PQPAAPVEPVTPPVNVPQPPKAEPGQNVPPPPKMQ) is disordered. Over residues 30-61 (PAAPVEPVTPPVNVPQPPKAEPGQNVPPPPKM) the composition is skewed to pro residues.

It belongs to the LpoB family. Interacts with PBP1b.

It localises to the cell outer membrane. In terms of biological role, regulator of peptidoglycan synthesis that is essential for the function of penicillin-binding protein 1B (PBP1b). The protein is Penicillin-binding protein activator LpoB of Erwinia amylovora (strain CFBP1430).